The following is a 51-amino-acid chain: Large ribosomal subunit protein eL39 (51 aa).

The interval M1 to L23 is disordered.

The protein belongs to the eukaryotic ribosomal protein eL39 family. Component of the large ribosomal subunit. Mature ribosomes consist of a small (40S) and a large (60S) subunit. The 40S subunit contains about 32 different proteins and 1 molecule of RNA (18S). The 60S subunit contains 45 different proteins and 3 molecules of RNA (25S, 5.8S and 5S).

It is found in the cytoplasm. Functionally, component of the ribosome, a large ribonucleoprotein complex responsible for the synthesis of proteins in the cell. The small ribosomal subunit (SSU) binds messenger RNAs (mRNAs) and translates the encoded message by selecting cognate aminoacyl-transfer RNA (tRNA) molecules. The large subunit (LSU) contains the ribosomal catalytic site termed the peptidyl transferase center (PTC), which catalyzes the formation of peptide bonds, thereby polymerizing the amino acids delivered by tRNAs into a polypeptide chain. The nascent polypeptides leave the ribosome through a tunnel in the LSU and interact with protein factors that function in enzymatic processing, targeting, and the membrane insertion of nascent chains at the exit of the ribosomal tunnel. The polypeptide is Large ribosomal subunit protein eL39 (Candida albicans (strain SC5314 / ATCC MYA-2876) (Yeast)).